The following is a 105-amino-acid chain: Thioredoxin (105 aa).

In terms of domain architecture, Thioredoxin spans 1-105 (MASNVTDKSF…SLIEWINNNI (105 aa)). Cysteine 30 and cysteine 33 form a disulfide bridge.

This sequence belongs to the thioredoxin family.

Functionally, component of the thioredoxin-thioredoxin reductase system. Participates in various redox reactions through the reversible oxidation of its active center dithiol to a disulfide and catalyzes dithiol-disulfide exchange reactions. This chain is Thioredoxin (trxA), found in Rickettsia bellii (strain RML369-C).